A 398-amino-acid chain; its full sequence is Potassium channel subfamily K member 4 (398 aa).

At 1–3 (MRS) the chain is on the cytoplasmic side. The chain crosses the membrane as a helical span at residues 4-24 (TTLLALLALVLLYLVSGALVF). Residues 25-88 (QALEQPHEQQ…WTNSSNHSSA (64 aa)) are Extracellular-facing. N-linked (GlcNAc...) asparagine glycosylation is found at Asn81 and Asn84. The helical intramembrane region spans 89-103 (WNLGSAFFFSGTIIT). Residues Thr104, Ile105, Gly106, and Tyr107 each contribute to the K(+) site. The tract at residues 104 to 109 (TIGYGN) is selectivity filter 1. The stretch at 104–110 (TIGYGNI) is an intramembrane region. The Extracellular segment spans residues 111 to 118 (VLHTDAGR). A helical membrane pass occupies residues 119–151 (LFCIFYALVGIPLFGMLLAGVGDRLGSSLRRGI). Residues 152 to 173 (GHIEAIFLKWHVPPGLVRSLSA) lie on the Cytoplasmic side of the membrane. A helical transmembrane segment spans residues 174–195 (VLFLLIGCLLFVLTPTFVFSYM). Residues 196-200 (ESWSK) lie on the Extracellular side of the membrane. The segment at residues 201–214 (LEAIYFVIVTLTTV) is an intramembrane region (helical). K(+) contacts are provided by Thr213, Val214, Gly215, and Phe216. The interval 213-218 (TVGFGD) is selectivity filter 2. An intramembrane segment occupies 215–220 (GFGDYV). The Extracellular segment spans residues 221–234 (PGDGTGQNSPAYQP). The helical transmembrane segment at 235-261 (LVWFWILFGLAYFASVLTTIGNWLRAV) threads the bilayer. Topologically, residues 262 to 398 (SRRTRAEMGG…GRLRDKAVPV (137 aa)) are cytoplasmic. A compositionally biased stretch (polar residues) spans 282-292 (TVTARVTQRTG). The segment at 282–398 (TVTARVTQRT…GRLRDKAVPV (117 aa)) is disordered. Residues 370–389 (PRGRRRPNPSKKPSRPRGPG) are compositionally biased toward basic residues.

It belongs to the two pore domain potassium channel (TC 1.A.1.8) family. Homodimer; disulfide-linked. Forms heterodimers with other 2-pore domain K(+) channel subunits, such as KCNK2 and KCNK10. Post-translationally, N-glycosylated. In terms of tissue distribution, expressed in brain, spinal cord and eye. Not detected in heart, skeletal muscle, liver, lungs, kidney and testis.

The protein resides in the cell membrane. The protein localises to the cell projection. It is found in the axon. The enzyme catalyses K(+)(in) = K(+)(out). The catalysed reaction is Rb(+)(in) = Rb(+)(out). It catalyses the reaction Cs(+)(in) = Cs(+)(out). With respect to regulation, activated by arachidonic acid and other polyunsaturated fatty acids. Not affected by volatile general anesthetics such as chloroform, diethyl ether, halothane and isoflurane. Activated at intracellular and extracellular basic pHs. Functionally, k(+) channel that conducts voltage-dependent outward rectifying currents upon membrane depolarization. Voltage sensing is coupled to K(+) electrochemical gradient in an 'ion flux gating' mode where outward but not inward ion flow opens the gate. Converts to voltage-independent 'leak' conductance mode upon stimulation by various stimuli including mechanical membrane stretch, basic pH, temperature and lipids. Homo- and heterodimerizes to form functional channels with distinct regulatory and gating properties. At trigeminal A-beta afferent nerves, the heterodimer of KCNK2/TREK-1 and KCNK4/TRAAK is mostly coexpressed at nodes of Ranvier where it conducts voltage-independent mechanosensitive and thermosensitive currents, allowing rapid action potential repolarization, high speed and high frequence saltatory conduction on myelinated nerves to ensure prompt sensory responses. Permeable to other monovalent cations such as Rb(+) and Cs(+). The protein is Potassium channel subfamily K member 4 of Mus musculus (Mouse).